The following is a 950-amino-acid chain: Oxysterol-binding protein-related protein 1 (950 aa).

The interval Met1–Arg237 is interaction with RAB7A. ANK repeat units lie at residues Leu47 to Met76, Met80 to Val109, and Leu175 to Leu204. The PH domain occupies Leu235 to Ala334. Residues Asn430–Glu463 adopt a coiled-coil conformation. Positions Ser469–Ser483 match the FFAT motif. The residue at position 499 (Ser499) is a Phosphoserine. Disordered stretches follow at residues Glu502–Ile530 and Lys795–Ser821. A coiled-coil region spans residues Arg879–Asp913.

The protein belongs to the OSBP family. In terms of assembly, interacts (via FFAT motif) with VAPA and VAPB. Interacts with the GTP-bound form of RAB7A. Interacts with OAS1B. Interacts (via FFAT motif) with MOSPD2 (via MSP domain). Ubiquitous.

The protein localises to the late endosome. Its function is as follows. Binds phospholipids; exhibits strong binding to phosphatidic acid and weak binding to phosphatidylinositol 3-phosphate. Stabilizes GTP-bound RAB7A on late endosomes/lysosomes and alters functional properties of late endocytic compartments via its interaction with RAB7A. Binds 25-hydroxycholesterol and cholesterol. The polypeptide is Oxysterol-binding protein-related protein 1 (Mus musculus (Mouse)).